Reading from the N-terminus, the 220-residue chain is Splicing factor U2AF 26 kDa subunit (220 aa).

Alanine 2 is modified (N-acetylalanine). Residues 12–40 (EKDKVNCSFYFKIGVCRHGDRCSRLHNKP) form a C3H1-type 1 zinc finger. One can recognise an RRM domain in the interval 65-147 (SHCHVSDVEV…QAVHGELSPV (83 aa)). Residues 149-176 (DFRESCCRQYEMGECTRGGFCNFMHLRP) form a C3H1-type 2 zinc finger. The tract at residues 185-220 (LYGRGPRRRSPPRFHTGHHPRERNHRCSPDHWHGRF) is disordered. Residues 189–208 (GPRRRSPPRFHTGHHPRERN) show a composition bias toward basic residues. The span at 209–220 (HRCSPDHWHGRF) shows a compositional bias: basic and acidic residues.

Belongs to the splicing factor SR family. In terms of assembly, interacts with GFI1, U2AF2 and C1QBP. As to expression, isoform 2 is widely expressed. Isoform 3 is highly expressed in heart, brain and lung, lower expressed in thymus and much lower expressed in peripheral blood leukocytes.

The protein resides in the nucleus. Its subcellular location is the nucleus speckle. It is found in the cytoplasm. RNA-binding protein that function as a pre-mRNA splicing factor. Plays a critical role in both constitutive and enhancer-dependent splicing by mediating protein-protein interactions and protein-RNA interactions required for accurate 3'-splice site selection. Acts by enhancing the binding of U2AF2 to weak pyrimidine tracts. Also participates in the regulation of alternative pre-mRNA splicing. Activates exon 5 skipping of PTPRC during T-cell activation; an event reversed by GFI1. Binds to RNA at the AG dinucleotide at the 3'-splice site. Shows a preference for AGC or AGA. The polypeptide is Splicing factor U2AF 26 kDa subunit (U2AF1L4) (Homo sapiens (Human)).